Here is a 166-residue protein sequence, read N- to C-terminus: Flagellar assembly factor FliW (166 aa).

Belongs to the FliW family. As to quaternary structure, interacts with translational regulator CsrA and flagellin(s).

It localises to the cytoplasm. Functionally, acts as an anti-CsrA protein, binds CsrA and prevents it from repressing translation of its target genes, one of which is flagellin. Binds to flagellin and participates in the assembly of the flagellum. This Desulfovibrio desulfuricans (strain ATCC 27774 / DSM 6949 / MB) protein is Flagellar assembly factor FliW.